The following is a 607-amino-acid chain: Rap1 GTPase-GDP dissociation stimulator 1-B (607 aa).

ARM repeat units follow at residues 79–118 (ELMRIPCVEADLIPPLVQLLHSKDQEVLLQTGRALGNICY), 170–211 (DSLQ…NLAE), 347–390 (DGNC…NLAI), 391–431 (PVVN…MLID), and 479–519 (SKDV…LIAA).

In terms of assembly, interacts with ralB. Probably interacts with the post-translationally isoprenylated (geranyl-geranylation) forms of ral proteins. Interacts with both GDP-bound and GTP-bound forms of ralA, but interaction is much stronger with ralA-GDP.

The protein localises to the cytoplasm. The protein resides in the cytosol. It is found in the endoplasmic reticulum. It localises to the mitochondrion. In terms of biological role, stimulates GDP/GTP exchange reaction of a group of small GTP-binding proteins (G proteins) including Rap1a/Rap1b, RhoA, RhoB and KRas, by stimulating the dissociation of GDP from and the subsequent binding of GTP to each small G protein. The polypeptide is Rap1 GTPase-GDP dissociation stimulator 1-B (rap1gds1-b) (Xenopus laevis (African clawed frog)).